A 376-amino-acid polypeptide reads, in one-letter code: Putative cytosolic 5'-nucleotidase 3 (376 aa).

Residue Asp119 is the Nucleophile of the active site. 2 residues coordinate Mg(2+): Asp119 and Asp121. The active-site Proton donor is Asp121. Substrate contacts are provided by residues Glu168, Ser189, 236–237, and Lys286; that span reads SA. Asp312 contacts Mg(2+).

Belongs to the pyrimidine 5'-nucleotidase family.

Its subcellular location is the cytoplasm. It catalyses the reaction a ribonucleoside 5'-phosphate + H2O = a ribonucleoside + phosphate. This is Putative cytosolic 5'-nucleotidase 3 from Caenorhabditis elegans.